Here is a 158-residue protein sequence, read N- to C-terminus: Transcription elongation factor GreA (158 aa).

The protein belongs to the GreA/GreB family.

In terms of biological role, necessary for efficient RNA polymerase transcription elongation past template-encoded arresting sites. The arresting sites in DNA have the property of trapping a certain fraction of elongating RNA polymerases that pass through, resulting in locked ternary complexes. Cleavage of the nascent transcript by cleavage factors such as GreA or GreB allows the resumption of elongation from the new 3'terminus. GreA releases sequences of 2 to 3 nucleotides. The polypeptide is Transcription elongation factor GreA (Psychrobacter cryohalolentis (strain ATCC BAA-1226 / DSM 17306 / VKM B-2378 / K5)).